A 141-amino-acid chain; its full sequence is Putative pre-16S rRNA nuclease (141 aa).

This sequence belongs to the YqgF nuclease family.

Its subcellular location is the cytoplasm. Could be a nuclease involved in processing of the 5'-end of pre-16S rRNA. This Coxiella burnetii (strain CbuG_Q212) (Coxiella burnetii (strain Q212)) protein is Putative pre-16S rRNA nuclease.